Consider the following 89-residue polypeptide: Small ribosomal subunit protein uS15 (89 aa).

The protein belongs to the universal ribosomal protein uS15 family. Part of the 30S ribosomal subunit. Forms a bridge to the 50S subunit in the 70S ribosome, contacting the 23S rRNA.

Its function is as follows. One of the primary rRNA binding proteins, it binds directly to 16S rRNA where it helps nucleate assembly of the platform of the 30S subunit by binding and bridging several RNA helices of the 16S rRNA. Functionally, forms an intersubunit bridge (bridge B4) with the 23S rRNA of the 50S subunit in the ribosome. This is Small ribosomal subunit protein uS15 from Rhizobium meliloti (strain 1021) (Ensifer meliloti).